The following is a 377-amino-acid chain: Queuine tRNA-ribosyltransferase (377 aa).

Asp89 acts as the Proton acceptor in catalysis. Substrate is bound by residues 89–93 (DSGGF), Asp143, Gln187, and Gly214. Residues 245–251 (GVGKPED) are RNA binding. Asp264 serves as the catalytic Nucleophile. The interval 269–273 (TRNAR) is RNA binding; important for wobble base 34 recognition. Zn(2+) contacts are provided by Cys302, Cys304, Cys307, and His333.

The protein belongs to the queuine tRNA-ribosyltransferase family. As to quaternary structure, homodimer. Within each dimer, one monomer is responsible for RNA recognition and catalysis, while the other monomer binds to the replacement base PreQ1. Zn(2+) serves as cofactor.

It catalyses the reaction 7-aminomethyl-7-carbaguanine + guanosine(34) in tRNA = 7-aminomethyl-7-carbaguanosine(34) in tRNA + guanine. Its pathway is tRNA modification; tRNA-queuosine biosynthesis. In terms of biological role, catalyzes the base-exchange of a guanine (G) residue with the queuine precursor 7-aminomethyl-7-deazaguanine (PreQ1) at position 34 (anticodon wobble position) in tRNAs with GU(N) anticodons (tRNA-Asp, -Asn, -His and -Tyr). Catalysis occurs through a double-displacement mechanism. The nucleophile active site attacks the C1' of nucleotide 34 to detach the guanine base from the RNA, forming a covalent enzyme-RNA intermediate. The proton acceptor active site deprotonates the incoming PreQ1, allowing a nucleophilic attack on the C1' of the ribose to form the product. After dissociation, two additional enzymatic reactions on the tRNA convert PreQ1 to queuine (Q), resulting in the hypermodified nucleoside queuosine (7-(((4,5-cis-dihydroxy-2-cyclopenten-1-yl)amino)methyl)-7-deazaguanosine). The sequence is that of Queuine tRNA-ribosyltransferase from Shewanella halifaxensis (strain HAW-EB4).